Consider the following 627-residue polypeptide: Threonine--tRNA ligase (627 aa).

The catalytic stretch occupies residues 221-523; it reads DHRKLGRELG…LIEHFAGDFP (303 aa). 3 residues coordinate Zn(2+): cysteine 319, histidine 370, and histidine 500.

The protein belongs to the class-II aminoacyl-tRNA synthetase family. Homodimer. Zn(2+) is required as a cofactor.

It is found in the cytoplasm. It catalyses the reaction tRNA(Thr) + L-threonine + ATP = L-threonyl-tRNA(Thr) + AMP + diphosphate + H(+). Its function is as follows. Catalyzes the attachment of threonine to tRNA(Thr) in a two-step reaction: L-threonine is first activated by ATP to form Thr-AMP and then transferred to the acceptor end of tRNA(Thr). Also edits incorrectly charged L-seryl-tRNA(Thr). The protein is Threonine--tRNA ligase of Gloeobacter violaceus (strain ATCC 29082 / PCC 7421).